A 310-amino-acid polypeptide reads, in one-letter code: tRNA dimethylallyltransferase (310 aa).

15–22 contacts ATP; that stretch reads GATASGKT. Residue 17–22 participates in substrate binding; it reads TASGKT.

This sequence belongs to the IPP transferase family. In terms of assembly, monomer. Mg(2+) is required as a cofactor.

The enzyme catalyses adenosine(37) in tRNA + dimethylallyl diphosphate = N(6)-dimethylallyladenosine(37) in tRNA + diphosphate. In terms of biological role, catalyzes the transfer of a dimethylallyl group onto the adenine at position 37 in tRNAs that read codons beginning with uridine, leading to the formation of N6-(dimethylallyl)adenosine (i(6)A). In Nocardioides sp. (strain ATCC BAA-499 / JS614), this protein is tRNA dimethylallyltransferase.